The following is a 150-amino-acid chain: MKVVFLEDVKGQGKKGQIKEVPTGYAQNFLIKKNLAKVATAAALSEVKGQAKAKEKEEAELLAEAKALKEVLEKDETVVEIKMKVGQTGHTFGAVDKADIAKALKSQFGLKLDKRKIQLINKIQALGTKDVPVKLHRDVTAMVKVKISEA.

It belongs to the bacterial ribosomal protein bL9 family.

In terms of biological role, binds to the 23S rRNA. The polypeptide is Large ribosomal subunit protein bL9 (Lactococcus lactis subsp. cremoris (strain SK11)).